The primary structure comprises 260 residues: MQDDLKNAPIGFFDSGLGGLSVLRKALEMMPNENYIYYGDSKHAPYGEKTPQEIRSLSFNAIEFLIKKGAKAIVIACNTATSAAAHDLREYYKDIPIIGIEPALKPAIKLHETGSVIVMATKATLNQEKFKNLMDKYGEHREVIPLPCPGLVEFIEAGDLEGEDVKNFLREKLNPYMDREISSIVLGCTHYPFVKDVIQDIVGEKVDIIDGSSGTVRELKRRLEENNMESESKKKGNLDIFNSLEDKKILELSKKLIEIK.

Substrate-binding positions include 14–15 and 46–47; these read DS and YG. The active-site Proton donor/acceptor is Cys77. 78–79 is a substrate binding site; it reads NT. Cys188 (proton donor/acceptor) is an active-site residue. Residue 189–190 coordinates substrate; sequence TH.

Belongs to the aspartate/glutamate racemases family.

It carries out the reaction L-glutamate = D-glutamate. The protein operates within cell wall biogenesis; peptidoglycan biosynthesis. Provides the (R)-glutamate required for cell wall biosynthesis. The sequence is that of Glutamate racemase from Clostridium perfringens (strain ATCC 13124 / DSM 756 / JCM 1290 / NCIMB 6125 / NCTC 8237 / Type A).